We begin with the raw amino-acid sequence, 194 residues long: Rho-related protein racC (194 aa).

13 residues coordinate GTP: Ala-17, Gly-19, Lys-20, Thr-21, Cys-22, Glu-34, Tyr-36, Thr-39, Gly-64, Lys-120, Asp-122, Ala-163, and Lys-164. Thr-21 contributes to the Mg(2+) binding site. 2 short sequence motifs (switch) span residues 30–41 and 61–79; these read RKFPEDYIPTVF and DTAGQEEYDQLRPLSYSSA. Thr-39 serves as a coordination point for Mg(2+). Cys-191 is modified (cysteine methyl ester). Residue Cys-191 is the site of S-geranylgeranyl cysteine attachment. A propeptide spans 192 to 194 (removed in mature form); that stretch reads ALL.

The protein belongs to the small GTPase superfamily. Rho family. In terms of assembly, interacts (GTP-bound form) with PAK4 (via CRIB domain). Interacts (GTP-bound form) with PAK5 (via CRIB domain). The cofactor is Mg(2+).

It is found in the cell membrane. It localises to the cytoplasm. Its subcellular location is the cytoskeleton. It carries out the reaction GTP + H2O = GDP + phosphate + H(+). Its activity is regulated as follows. Regulated by guanine nucleotide exchange factors (GEFs) which promote the exchange of bound GDP for free GTP, GTPase activating proteins (GAPs) which increase the GTP hydrolysis activity, and GDP dissociation inhibitors which inhibit the dissociation of the nucleotide from the GTPase. Functionally, small GTPase which cycles between active GTP-bound and inactive GDP-bound states. In Entamoeba histolytica (strain ATCC 30459 / HM-1:IMSS / ABRM), this protein is Rho-related protein racC.